The primary structure comprises 78 residues: Small ribosomal subunit protein bS20 (78 aa).

This sequence belongs to the bacterial ribosomal protein bS20 family.

In terms of biological role, binds directly to 16S ribosomal RNA. This is Small ribosomal subunit protein bS20 from Streptococcus pneumoniae serotype 2 (strain D39 / NCTC 7466).